Reading from the N-terminus, the 261-residue chain is Cytochrome c oxidase subunit 3 (261 aa).

The Mitochondrial matrix segment spans residues 1-15; that stretch reads MTHQTHAYHMVNPSP. The chain crosses the membrane as a helical span at residues 16–34; sequence WPLTGALSALLMTSGLAMW. The Mitochondrial intermembrane portion of the chain corresponds to 35–40; sequence FHFNST. Residues 41–66 traverse the membrane as a helical segment; the sequence is LLLAMGLLTNILTMYQWWRDIIREST. Residues 67 to 72 are Mitochondrial matrix-facing; it reads FQGHHT. A helical transmembrane segment spans residues 73 to 105; the sequence is SIVQKGLRYGMILFIISEVFFFSGFFWAFYHSS. At 106–128 the chain is on the mitochondrial intermembrane side; sequence LAPTPELGGCWPPTGIHPLNPLE. The helical transmembrane segment at 129 to 152 threads the bilayer; that stretch reads VPLLNTSVLLASGVSITWAHHSLM. The Mitochondrial matrix segment spans residues 153-155; the sequence is EGN. A helical membrane pass occupies residues 156 to 183; it reads RKNMLQGLFITISLGVYFTLLQASEYYE. Residues 184–190 lie on the Mitochondrial intermembrane side of the membrane; sequence ASFTISD. The helical transmembrane segment at 191 to 223 threads the bilayer; that stretch reads GVYGSTFFVATGFHGLHVIIGSTFLIVCFLRQL. Residues 224–232 lie on the Mitochondrial matrix side of the membrane; that stretch reads KFHFTSSHH. A helical transmembrane segment spans residues 233–256; sequence FGFEAAAWYWHFVDVVWLFLYVSI. The Mitochondrial intermembrane segment spans residues 257-261; that stretch reads YWWGS.

Belongs to the cytochrome c oxidase subunit 3 family. As to quaternary structure, component of the cytochrome c oxidase (complex IV, CIV), a multisubunit enzyme composed of 14 subunits. The complex is composed of a catalytic core of 3 subunits MT-CO1, MT-CO2 and MT-CO3, encoded in the mitochondrial DNA, and 11 supernumerary subunits COX4I, COX5A, COX5B, COX6A, COX6B, COX6C, COX7A, COX7B, COX7C, COX8 and NDUFA4, which are encoded in the nuclear genome. The complex exists as a monomer or a dimer and forms supercomplexes (SCs) in the inner mitochondrial membrane with NADH-ubiquinone oxidoreductase (complex I, CI) and ubiquinol-cytochrome c oxidoreductase (cytochrome b-c1 complex, complex III, CIII), resulting in different assemblies (supercomplex SCI(1)III(2)IV(1) and megacomplex MCI(2)III(2)IV(2)).

It localises to the mitochondrion inner membrane. It carries out the reaction 4 Fe(II)-[cytochrome c] + O2 + 8 H(+)(in) = 4 Fe(III)-[cytochrome c] + 2 H2O + 4 H(+)(out). Component of the cytochrome c oxidase, the last enzyme in the mitochondrial electron transport chain which drives oxidative phosphorylation. The respiratory chain contains 3 multisubunit complexes succinate dehydrogenase (complex II, CII), ubiquinol-cytochrome c oxidoreductase (cytochrome b-c1 complex, complex III, CIII) and cytochrome c oxidase (complex IV, CIV), that cooperate to transfer electrons derived from NADH and succinate to molecular oxygen, creating an electrochemical gradient over the inner membrane that drives transmembrane transport and the ATP synthase. Cytochrome c oxidase is the component of the respiratory chain that catalyzes the reduction of oxygen to water. Electrons originating from reduced cytochrome c in the intermembrane space (IMS) are transferred via the dinuclear copper A center (CU(A)) of subunit 2 and heme A of subunit 1 to the active site in subunit 1, a binuclear center (BNC) formed by heme A3 and copper B (CU(B)). The BNC reduces molecular oxygen to 2 water molecules using 4 electrons from cytochrome c in the IMS and 4 protons from the mitochondrial matrix. This Equus caballus (Horse) protein is Cytochrome c oxidase subunit 3 (MT-CO3).